The chain runs to 315 residues: MAQPRIGQTVVVDVPATTANIGPGFDCLGAALDLNNRFTMRRIEGDGERFELIIEGQEGSHLRGGAENLVYRAAQRVWKAAGEEPVALEARVRLAVPPARGLGSSATAIVAGLVGANALVGEPLSKEKLLELAIDIEGHPDNVVPSLLGGLCMTAKAASQRWRVVRCEWMHSVKAVVAIPAIRLSTSEARRAMPKTVPVGDAVVNLGALTLLLQGLRTGNGDLIADGMHDRLHEPYRWRLIKGGQEVRQAALEAGAWGCAISGAGPSILALCSEDKGPGISQAMVRAWESVGVASRAPLLNLQTTGSHWQPWDAG.

97-107 (PPARGLGSSAT) is a binding site for ATP.

Belongs to the GHMP kinase family. Homoserine kinase subfamily.

The protein localises to the cytoplasm. It catalyses the reaction L-homoserine + ATP = O-phospho-L-homoserine + ADP + H(+). It functions in the pathway amino-acid biosynthesis; L-threonine biosynthesis; L-threonine from L-aspartate: step 4/5. Functionally, catalyzes the ATP-dependent phosphorylation of L-homoserine to L-homoserine phosphate. The sequence is that of Homoserine kinase from Synechococcus sp. (strain WH7803).